The primary structure comprises 1697 residues: Chromatin-remodeling ATPase INO80 (1697 aa).

Disordered stretches follow at residues 1–324 (MTGA…SDVE), 398–569 (QDEK…LSAY), and 615–637 (ASKQ…QARA). Composition is skewed to polar residues over residues 33 to 53 (NNEQ…SRSP), 85 to 94 (QYQAHSSAGN), and 108 to 122 (LSGN…STPS). The span at 128-143 (GRPDSHPQTSPKKESE) shows a compositional bias: basic and acidic residues. Residues 202-221 (SSAEATPTPLAPAATAQTSL) are compositionally biased toward low complexity. A compositionally biased stretch (basic and acidic residues) spans 248–271 (RLEKKPTTEKRRRNPPETEQKTAD). Positions 272–288 (SRTSNVANGVSEPSKTL) are enriched in polar residues. Residues 383 to 466 (ANEASVVAEV…TKRALEGITA (84 aa)) adopt a coiled-coil conformation. Basic and acidic residues-rich tracts occupy residues 414 to 451 (ENTV…ERAQ), 512 to 523 (SKEQKQAEKDAA), 540 to 560 (PKED…RSKE), and 621 to 635 (KWQE…DTQA). The DBINO domain occupies 581 to 706 (IWRDIARKDI…SHFIGRKIKG (126 aa)). Residues 623–694 (QERTNKSMKD…KLNFLISQTE (72 aa)) adopt a coiled-coil conformation. Residues 835 to 1007 (VNLYEQGING…WALLHFIMPT (173 aa)) form the Helicase ATP-binding domain. 848-855 (DEMGLGKT) lines the ATP pocket. The short motif at 958–961 (DEAQ) is the DEAQ box element. The Helicase C-terminal domain maps to 1410–1570 (KLDELLRELK…GVDFNTRNRE (161 aa)). A disordered region spans residues 1626–1697 (YHEGEGNFDD…IDGDGGLGPS (72 aa)). Over residues 1646 to 1658 (PVSTAENVGTPSS) the composition is skewed to polar residues. A compositionally biased stretch (basic residues) spans 1663 to 1679 (KRGRGRGSGKGTSKRAK). The span at 1680–1689 (TTKERLRLID) shows a compositional bias: basic and acidic residues.

It belongs to the SNF2/RAD54 helicase family. As to quaternary structure, component of the INO80 chromatin-remodeling complex.

The protein resides in the nucleus. It carries out the reaction ATP + H2O = ADP + phosphate + H(+). Functionally, ATPase component of the INO80 complex which remodels chromatin by shifting nucleosomes and is involved in DNA repair. This is Chromatin-remodeling ATPase INO80 (ino80) from Aspergillus niger (strain ATCC MYA-4892 / CBS 513.88 / FGSC A1513).